Here is a 794-residue protein sequence, read N- to C-terminus: Protein IQ-DOMAIN 32 (794 aa).

The interval 15–101 (CSGGDDTSAD…QSFSVDEKKS (87 aa)) is disordered. Polar residues-rich tracts occupy residues 23–33 (ADPNSTALENK) and 56–65 (SVVSETTPAS). A phosphoserine mark is found at Ser-78, Ser-80, Ser-142, Ser-193, and Ser-195. Residues 80–95 (SPDNNNVSEKQQQSFS) show a composition bias toward polar residues. IQ domains are found at residues 214 to 242 (DESVIVVIQAAVRGFLARRELLRSKKVIK) and 243 to 265 (LQAAVRGHLVRSQAMGSLRCVQA). The interval 230 to 241 (ARRELLRSKKVI) is calmodulin-binding. The disordered stretch occupies residues 277–296 (HSTKDGSRVSATSDKSEPNA). The residue at position 369 (Ser-369) is a Phosphoserine. The interval 375–417 (VNSDSTVENKTETDMPSYEASKVEGQNVELSETEKMSQYDSPE) is disordered. The residue at position 459 (Ser-459) is a Phosphoserine. Disordered stretches follow at residues 472–555 (ELTS…RVEA) and 578–794 (ATSM…KWQR). A compositionally biased stretch (polar residues) spans 473–486 (LTSSTGSNKAMTLS). The span at 487 to 500 (SKDDVLGEEGKTDI) shows a compositional bias: basic and acidic residues. Residues Ser-502 and Ser-544 each carry the phosphoserine modification. Composition is skewed to basic and acidic residues over residues 539-555 (TLEKKSDAEGAEPRVEA) and 585-607 (EDPKEKVENAKDEVEISATHHEP). The segment covering 643-654 (SQATPASQASSS) has biased composition (low complexity). Residues 657–664 (ARKGKSEK) carry the Nuclear localization signal motif. A compositionally biased stretch (polar residues) spans 768–786 (NGKQVSPRIQRSASQAQQG).

Belongs to the IQD family. As to quaternary structure, binds to multiple calmodulin (CaM) in the presence of Ca(2+) and CaM-like proteins.

The protein resides in the nucleus. It localises to the cytoplasm. The protein localises to the cytoskeleton. Functionally, may be involved in cooperative interactions with calmodulins or calmodulin-like proteins. Recruits calmodulin proteins to microtubules, thus being a potential scaffold in cellular signaling and trafficking. May associate with nucleic acids and regulate gene expression at the transcriptional or post-transcriptional level. This chain is Protein IQ-DOMAIN 32, found in Arabidopsis thaliana (Mouse-ear cress).